The primary structure comprises 127 residues: UPF0325 protein VIBHAR_03240 (127 aa).

The protein belongs to the UPF0325 family.

This Vibrio campbellii (strain ATCC BAA-1116) protein is UPF0325 protein VIBHAR_03240.